We begin with the raw amino-acid sequence, 157 residues long: ATP synthase subunit b' (157 aa).

A helical transmembrane segment spans residues 22-42 (ATLPLIAIQFLLLVAVLNSLF).

The protein belongs to the ATPase B chain family. In terms of assembly, F-type ATPases have 2 components, F(1) - the catalytic core - and F(0) - the membrane proton channel. F(1) has five subunits: alpha(3), beta(3), gamma(1), delta(1), epsilon(1). F(0) has four main subunits: a(1), b(1), b'(1) and c(10-14). The alpha and beta chains form an alternating ring which encloses part of the gamma chain. F(1) is attached to F(0) by a central stalk formed by the gamma and epsilon chains, while a peripheral stalk is formed by the delta, b and b' chains.

The protein resides in the cellular thylakoid membrane. In terms of biological role, f(1)F(0) ATP synthase produces ATP from ADP in the presence of a proton or sodium gradient. F-type ATPases consist of two structural domains, F(1) containing the extramembraneous catalytic core and F(0) containing the membrane proton channel, linked together by a central stalk and a peripheral stalk. During catalysis, ATP synthesis in the catalytic domain of F(1) is coupled via a rotary mechanism of the central stalk subunits to proton translocation. Its function is as follows. Component of the F(0) channel, it forms part of the peripheral stalk, linking F(1) to F(0). The b'-subunit is a diverged and duplicated form of b found in plants and photosynthetic bacteria. This Synechococcus sp. (strain JA-2-3B'a(2-13)) (Cyanobacteria bacterium Yellowstone B-Prime) protein is ATP synthase subunit b'.